Here is a 377-residue protein sequence, read N- to C-terminus: Phosphatidylserine decarboxylase proenzyme, mitochondrial (377 aa).

A mitochondrion-targeting transit peptide spans 1–34; that stretch reads MMPLFNVLRSARMLPAVSKKVVSPPMMLRSVREL. Residues 35 to 61 lie on the Mitochondrial matrix side of the membrane; it reads TNQSKNVYATKEVIIGASQKKKRSWVK. A helical membrane pass occupies residues 62–80; that stretch reads WLSVSTLIIGGASYVGYLF. At 81–377 the chain is on the mitochondrial intermembrane side; sequence TPDWREIVDS…YGQSLVADGV (297 aa). Catalysis depends on charge relay system; for autoendoproteolytic cleavage activity residues Asp-181, His-238, and Ser-344. Ser-344 serves as the catalytic Schiff-base intermediate with substrate; via pyruvic acid; for decarboxylase activity. A Pyruvic acid (Ser); by autocatalysis modification is found at Ser-344.

Belongs to the phosphatidylserine decarboxylase family. PSD-B subfamily. Eukaryotic type I sub-subfamily. In terms of assembly, heterodimer of a large membrane-associated beta subunit and a small pyruvoyl-containing alpha subunit. Pyruvate serves as cofactor. In terms of processing, is synthesized initially as an inactive proenzyme. Formation of the active enzyme involves a self-maturation process in which the active site pyruvoyl group is generated from an internal serine residue via an autocatalytic post-translational modification. Two non-identical subunits are generated from the proenzyme in this reaction, and the pyruvate is formed at the N-terminus of the alpha chain, which is derived from the carboxyl end of the proenzyme. The autoendoproteolytic cleavage occurs by a canonical serine protease mechanism, in which the side chain hydroxyl group of the serine supplies its oxygen atom to form the C-terminus of the beta chain, while the remainder of the serine residue undergoes an oxidative deamination to produce ammonia and the pyruvoyl prosthetic group on the alpha chain. During this reaction, the Ser that is part of the protease active site of the proenzyme becomes the pyruvoyl prosthetic group, which constitutes an essential element of the active site of the mature decarboxylase.

The protein localises to the mitochondrion inner membrane. It catalyses the reaction a 1,2-diacyl-sn-glycero-3-phospho-L-serine + H(+) = a 1,2-diacyl-sn-glycero-3-phosphoethanolamine + CO2. It participates in phospholipid metabolism; phosphatidylethanolamine biosynthesis; phosphatidylethanolamine from CDP-diacylglycerol: step 2/2. In terms of biological role, catalyzes the formation of phosphatidylethanolamine (PtdEtn) from phosphatidylserine (PtdSer). Plays a central role in phospholipid metabolism and in the interorganelle trafficking of phosphatidylserine. This is Phosphatidylserine decarboxylase proenzyme, mitochondrial from Caenorhabditis elegans.